Here is a 113-residue protein sequence, read N- to C-terminus: HIG1 domain-containing protein C25B8.07c, mitochondrial (113 aa).

The segment at 1–27 is disordered; the sequence is MSSKLPKKSEENLELPTFPASEESLSR. Residues 12–103 enclose the HIG1 domain; sequence NLELPTFPAS…PPRREAPSNS (92 aa). The next 2 membrane-spanning stretches (helical) occupy residues 39–59 and 75–95; these read PFIPLGCLMTVGTFLASGYYI and VMSQGFTLAALAFSVLFIGPP.

The protein resides in the mitochondrion membrane. This is HIG1 domain-containing protein C25B8.07c, mitochondrial from Schizosaccharomyces pombe (strain 972 / ATCC 24843) (Fission yeast).